The following is a 197-amino-acid chain: Na(+)-translocating NADH-quinone reductase subunit E (197 aa).

Helical transmembrane passes span 11 to 31 (SVFIENMALSFFLGMCTFLAV), 35 to 55 (VSTAFGLGVAVIFVLGLSVPV), 76 to 96 (FLKFITFIGVIAALVQILEMF), 108 to 128 (LGIYLPLITVNCAIFGAVSFM), 139 to 159 (VVYGFGAGLGWMLAIVALAGI), and 175 to 195 (LGITFIAAGLMAMAFMSFSGI).

It belongs to the NqrDE/RnfAE family. In terms of assembly, composed of six subunits; NqrA, NqrB, NqrC, NqrD, NqrE and NqrF.

Its subcellular location is the cell inner membrane. It carries out the reaction a ubiquinone + n Na(+)(in) + NADH + H(+) = a ubiquinol + n Na(+)(out) + NAD(+). Functionally, NQR complex catalyzes the reduction of ubiquinone-1 to ubiquinol by two successive reactions, coupled with the transport of Na(+) ions from the cytoplasm to the periplasm. NqrA to NqrE are probably involved in the second step, the conversion of ubisemiquinone to ubiquinol. The polypeptide is Na(+)-translocating NADH-quinone reductase subunit E (Neisseria meningitidis serogroup C (strain 053442)).